We begin with the raw amino-acid sequence, 510 residues long: MIWHVQNENFILDSTRIFMKAFHLLLFDGSLIFPECILIFGLILLLMIDSTSDQKDIPWLYFISSTSLVMSITALLFRWREEPMISFSGNFQTNNFNEIFQFLILLCSTLCIPLSVEYIECTEMAITEFLLFVLTATLGGMFLCGANDLITIFVAPECFSLCSYLLSGYTKKDVRSNEATMKYLLMGGASSSILVHGFSWLYGSSGGEIELQEIVNGLINTQMYNSPGISIALIFITVGIGFKLSPAPSHQWTPDVYEGSPTPVVAFLSVTSKVAASASATRIFDIPFYFSSNEWHLLLEILAILSMILGNLIAITQTSMKRMLAYSSIGQIGYVIIGIIVGDSNDGYASMITYMLFYISMNLGTFACIVLFGLRTGTDNIRDYAGLYTKDPFLALSLALCLLSLGGLPPLAGFFGKLYLFWCGWQAGLYFLVLIGLLTSVVSIYYYLKIIKLLMTGRNQEITPHVRNYRRSPLRSNNSIELSMIVCVIASTIPGISMNPIIAIAQDSLF.

13 helical membrane passes run 24–44, 57–77, 99–119, 124–144, 149–169, 183–203, 227–247, 295–315, 323–343, 354–374, 395–415, 418–438, and 484–504; these read LLLFDGSLIFPECILIFGLIL, IPWLYFISSTSLVMSITALLF, IFQFLILLCSTLCIPLSVEYI, MAITEFLLFVLTATLGGMFLC, LITIFVAPECFSLCSYLLSGY, YLLMGGASSSILVHGFSWLYG, PGISIALIFITVGIGFKLSPA, WHLLLEILAILSMILGNLIAI, MLAYSSIGQIGYVIIGIIVGD, YMLFYISMNLGTFACIVLFGL, ALSLALCLLSLGGLPPLAGFF, LYLFWCGWQAGLYFLVLIGLL, and MIVCVIASTIPGISMNPIIAI.

This sequence belongs to the complex I subunit 2 family. NDH is composed of at least 16 different subunits, 5 of which are encoded in the nucleus.

The protein resides in the plastid. It is found in the chloroplast thylakoid membrane. It carries out the reaction a plastoquinone + NADH + (n+1) H(+)(in) = a plastoquinol + NAD(+) + n H(+)(out). The catalysed reaction is a plastoquinone + NADPH + (n+1) H(+)(in) = a plastoquinol + NADP(+) + n H(+)(out). NDH shuttles electrons from NAD(P)H:plastoquinone, via FMN and iron-sulfur (Fe-S) centers, to quinones in the photosynthetic chain and possibly in a chloroplast respiratory chain. The immediate electron acceptor for the enzyme in this species is believed to be plastoquinone. Couples the redox reaction to proton translocation, and thus conserves the redox energy in a proton gradient. The sequence is that of NAD(P)H-quinone oxidoreductase subunit 2 A, chloroplastic from Solanum bulbocastanum (Wild potato).